The chain runs to 336 residues: Probable assembly chaperone of rpl4 (336 aa).

TPR repeat units lie at residues 39–72 (GRAF…SKNL), 75–108 (DQGY…LERL), 110–143 (IDKG…QPDA), and 162–195 (AEAL…ISRA). Positions 316–336 (DEENEEAEWETSENEEEMDED) are disordered.

The protein belongs to the ACL4 family.

The protein localises to the cytoplasm. It is found in the nucleus. Its subcellular location is the nucleolus. Acts as a chaperone for the L4 ribosomal subunit encoded by rpl4A and rpl4B, required for hierarchical ribosome assembly. Shields ribosomal protein L4 until timely release and insertion into the pre-ribosome is possible, once ribosomal protein L18 is present. The sequence is that of Probable assembly chaperone of rpl4 from Schizosaccharomyces pombe (strain 972 / ATCC 24843) (Fission yeast).